The chain runs to 329 residues: Malate dehydrogenase (329 aa).

12 to 18 (GAAGQIG) contributes to the NAD(+) binding site. Positions 93 and 99 each coordinate substrate. NAD(+)-binding positions include N106, Q113, and 130-132 (VGN). Substrate is bound by residues N132 and R163. H188 acts as the Proton acceptor in catalysis.

Belongs to the LDH/MDH superfamily. MDH type 2 family.

It carries out the reaction (S)-malate + NAD(+) = oxaloacetate + NADH + H(+). Catalyzes the reversible oxidation of malate to oxaloacetate. This chain is Malate dehydrogenase, found in Frankia alni (strain DSM 45986 / CECT 9034 / ACN14a).